The sequence spans 205 residues: Large ribosomal subunit protein bL9 (205 aa).

A disordered region spans residues 160–205; sequence RDRKSRNAAAASEVQDAPVEDGGDEVVSVDSVAAEDGGADASGGTA. Positions 184–195 are enriched in low complexity; it reads EVVSVDSVAAED.

This sequence belongs to the bacterial ribosomal protein bL9 family.

In terms of biological role, binds to the 23S rRNA. In Anaplasma phagocytophilum (strain HZ), this protein is Large ribosomal subunit protein bL9.